Here is a 159-residue protein sequence, read N- to C-terminus: ATP synthase subunit b 2 (159 aa).

The chain crosses the membrane as a helical span at residues 1 to 21 (MDATFWAFIALVIFVAIVVYM).

This sequence belongs to the ATPase B chain family. In terms of assembly, F-type ATPases have 2 components, F(1) - the catalytic core - and F(0) - the membrane proton channel. F(1) has five subunits: alpha(3), beta(3), gamma(1), delta(1), epsilon(1). F(0) has three main subunits: a(1), b(2) and c(10-14). The alpha and beta chains form an alternating ring which encloses part of the gamma chain. F(1) is attached to F(0) by a central stalk formed by the gamma and epsilon chains, while a peripheral stalk is formed by the delta and b chains.

It is found in the cell inner membrane. F(1)F(0) ATP synthase produces ATP from ADP in the presence of a proton or sodium gradient. F-type ATPases consist of two structural domains, F(1) containing the extramembraneous catalytic core and F(0) containing the membrane proton channel, linked together by a central stalk and a peripheral stalk. During catalysis, ATP synthesis in the catalytic domain of F(1) is coupled via a rotary mechanism of the central stalk subunits to proton translocation. In terms of biological role, component of the F(0) channel, it forms part of the peripheral stalk, linking F(1) to F(0). This chain is ATP synthase subunit b 2, found in Brucella ovis (strain ATCC 25840 / 63/290 / NCTC 10512).